Consider the following 370-residue polypeptide: tRNA N6-adenosine threonylcarbamoyltransferase (370 aa).

Fe cation-binding residues include histidine 122 and histidine 126. Residues leucine 153–glycine 157, aspartate 186, glycine 199, and asparagine 298 contribute to the substrate site. Fe cation is bound at residue aspartate 326.

This sequence belongs to the KAE1 / TsaD family. The cofactor is Fe(2+).

The protein resides in the cytoplasm. The catalysed reaction is L-threonylcarbamoyladenylate + adenosine(37) in tRNA = N(6)-L-threonylcarbamoyladenosine(37) in tRNA + AMP + H(+). Functionally, required for the formation of a threonylcarbamoyl group on adenosine at position 37 (t(6)A37) in tRNAs that read codons beginning with adenine. Is involved in the transfer of the threonylcarbamoyl moiety of threonylcarbamoyl-AMP (TC-AMP) to the N6 group of A37, together with TsaE and TsaB. TsaD likely plays a direct catalytic role in this reaction. The chain is tRNA N6-adenosine threonylcarbamoyltransferase from Granulibacter bethesdensis (strain ATCC BAA-1260 / CGDNIH1).